A 559-amino-acid chain; its full sequence is 2-isopropylmalate synthase (559 aa).

A Pyruvate carboxyltransferase domain is found at 33 to 307 (PIWCSSDLRD…DPQLDFSDID (275 aa)). Residues Asp-42, His-246, His-248, and Asn-282 each contribute to the Mg(2+) site. A regulatory domain region spans residues 439–559 (ANTPYALVSH…SLSQQEAKAA (121 aa)).

This sequence belongs to the alpha-IPM synthase/homocitrate synthase family. LeuA type 2 subfamily. In terms of assembly, homodimer. Mg(2+) serves as cofactor.

It is found in the cytoplasm. The enzyme catalyses 3-methyl-2-oxobutanoate + acetyl-CoA + H2O = (2S)-2-isopropylmalate + CoA + H(+). It functions in the pathway amino-acid biosynthesis; L-leucine biosynthesis; L-leucine from 3-methyl-2-oxobutanoate: step 1/4. In terms of biological role, catalyzes the condensation of the acetyl group of acetyl-CoA with 3-methyl-2-oxobutanoate (2-ketoisovalerate) to form 3-carboxy-3-hydroxy-4-methylpentanoate (2-isopropylmalate). The protein is 2-isopropylmalate synthase of Pseudomonas fluorescens (strain SBW25).